The chain runs to 232 residues: Ashwin (232 aa).

Basic and acidic residues-rich tracts occupy residues 64–97 (DLPK…DGLR) and 116–127 (KKTENGDNDRLR). The disordered stretch occupies residues 64-232 (DLPKSRWGKM…KRKIQHVTWP (169 aa)). The segment covering 130-140 (PQASATSNTFR) has biased composition (polar residues). Phosphoserine is present on serine 143. Positions 144–156 (DSSSSVSPLVLSS) are enriched in low complexity. Basic and acidic residues predominate over residues 163-179 (KMEHGNNDNKQNHDLTH). 3 positions are modified to phosphoserine: serine 182, serine 189, and serine 193. The residue at position 198 (threonine 198) is a Phosphothreonine.

This sequence belongs to the ashwin family. In terms of assembly, component of the tRNA-splicing ligase complex.

Its subcellular location is the nucleus. In Bos taurus (Bovine), this protein is Ashwin.